The sequence spans 204 residues: Large ribosomal subunit protein bL25 (204 aa).

The protein belongs to the bacterial ribosomal protein bL25 family. CTC subfamily. As to quaternary structure, part of the 50S ribosomal subunit; part of the 5S rRNA/L5/L18/L25 subcomplex. Contacts the 5S rRNA. Binds to the 5S rRNA independently of L5 and L18.

Its function is as follows. This is one of the proteins that binds to the 5S RNA in the ribosome where it forms part of the central protuberance. The sequence is that of Large ribosomal subunit protein bL25 from Wolbachia sp. subsp. Brugia malayi (strain TRS).